We begin with the raw amino-acid sequence, 140 residues long: MAAMTVHLDVVSAEQSLFSGRVESIQVTGSEGELGVNAGHAPLLTALKPGMVRLVKQFGEEEFIYIAGGTLEVQPNLVTVLADTAVRGEDLDEQAAEAAKRDAEAQMAKGASAELDYNQAAVQLAEAIAQLRIIQQLRKK.

It belongs to the ATPase epsilon chain family. In terms of assembly, F-type ATPases have 2 components, CF(1) - the catalytic core - and CF(0) - the membrane proton channel. CF(1) has five subunits: alpha(3), beta(3), gamma(1), delta(1), epsilon(1). CF(0) has three main subunits: a, b and c.

It localises to the cell inner membrane. In terms of biological role, produces ATP from ADP in the presence of a proton gradient across the membrane. This Pseudoalteromonas translucida (strain TAC 125) protein is ATP synthase epsilon chain.